The sequence spans 149 residues: uncharacterized protein (149 aa).

2 disordered regions span residues 24-74 (TSQG…NDLE) and 129-149 (AIQD…PRAP). A compositionally biased stretch (basic and acidic residues) spans 28–42 (EDVKPEPKPEVDEKV). Positions 102-131 (SELESLKEKVSSATSMEELREIMEEFRAIQ) form a coiled coil.

This is an uncharacterized protein from Archaeoglobus fulgidus (strain ATCC 49558 / DSM 4304 / JCM 9628 / NBRC 100126 / VC-16).